The chain runs to 2167 residues: Beige protein homolog 1 (2167 aa).

Residues 1368–1499 (KDNDSIATIW…VRDDVLRVLN (132 aa)) enclose the BEACH-type PH domain. The region spanning 1545–1839 (SANNSLIDGF…QIFQEPHPEK (295 aa)) is the BEACH domain. K1667 participates in a covalent cross-link: Glycyl lysine isopeptide (Lys-Gly) (interchain with G-Cter in ubiquitin). WD repeat units follow at residues 1927 to 1965 (THMA…HSVS), 1976 to 2015 (GHLC…LVRQ), 2017 to 2054 (TNDA…YTSK), 2072 to 2111 (KLDA…HNEW), and 2129 to 2167 (SIKG…AIWY).

Its subcellular location is the cytoplasm. It localises to the membrane. Its function is as follows. May be involved in protein sorting and cell wall formation. In Saccharomyces cerevisiae (strain ATCC 204508 / S288c) (Baker's yeast), this protein is Beige protein homolog 1 (BPH1).